The sequence spans 119 residues: MPRVKGGYVARRRRKKVLKLAKGYYGSKHTLFKSAQGQVMKSLQYAYRDRRQKKRDFRKLWITRINAAARLNGLSYSRLMHGLKLAEINVNRKMLADLAVNDEKAFAQLADKAKESLNS.

It belongs to the bacterial ribosomal protein bL20 family.

In terms of biological role, binds directly to 23S ribosomal RNA and is necessary for the in vitro assembly process of the 50S ribosomal subunit. It is not involved in the protein synthesizing functions of that subunit. The sequence is that of Large ribosomal subunit protein bL20 from Shouchella clausii (strain KSM-K16) (Alkalihalobacillus clausii).